A 358-amino-acid polypeptide reads, in one-letter code: Photosystem II protein D1 1 (358 aa).

3 helical membrane-spanning segments follow: residues 28-45, 117-132, and 141-155; these read YVGWFGVLMIPCLLAATI, HFLIGISAYMGRQWEL, and WICVAYSAPLSAAFA. Position 117 (H117) interacts with chlorophyll a. Y125 provides a ligand contact to pheophytin a. The [CaMn4O5] cluster site is built by D169 and E188. The helical transmembrane segment at 196–217 threads the bilayer; it reads FHMLGVAGVFGGSLFSAMHGSL. Residue H197 coordinates chlorophyll a. Residues H214 and 263–264 contribute to the a quinone site; that span reads SF. H214 serves as a coordination point for Fe cation. H271 is a Fe cation binding site. The helical transmembrane segment at 273–287 threads the bilayer; the sequence is FLGAWPVIGIWFTSM. H331, E332, D341, and A343 together coordinate [CaMn4O5] cluster. Residues 344-358 constitute a propeptide that is removed on maturation; sequence AAESTPVALQAPAIG.

The protein belongs to the reaction center PufL/M/PsbA/D family. PSII is composed of 1 copy each of membrane proteins PsbA, PsbB, PsbC, PsbD, PsbE, PsbF, PsbH, PsbI, PsbJ, PsbK, PsbL, PsbM, PsbT, PsbX, PsbY, PsbZ, Psb30/Ycf12, peripheral proteins PsbO, CyanoQ (PsbQ), PsbU, PsbV and a large number of cofactors. It forms dimeric complexes. Requires The D1/D2 heterodimer binds P680, chlorophylls that are the primary electron donor of PSII, and subsequent electron acceptors. It shares a non-heme iron and each subunit binds pheophytin, quinone, additional chlorophylls, carotenoids and lipids. D1 provides most of the ligands for the Mn4-Ca-O5 cluster of the oxygen-evolving complex (OEC). There is also a Cl(-1) ion associated with D1 and D2, which is required for oxygen evolution. The PSII complex binds additional chlorophylls, carotenoids and specific lipids. as cofactor. Tyr-160 forms a radical intermediate that is referred to as redox-active TyrZ, YZ or Y-Z. In terms of processing, C-terminally processed by CtpA; processing is essential to allow assembly of the oxygen-evolving complex and thus photosynthetic growth.

The protein localises to the cellular thylakoid membrane. It carries out the reaction 2 a plastoquinone + 4 hnu + 2 H2O = 2 a plastoquinol + O2. Functionally, photosystem II (PSII) is a light-driven water:plastoquinone oxidoreductase that uses light energy to abstract electrons from H(2)O, generating O(2) and a proton gradient subsequently used for ATP formation. It consists of a core antenna complex that captures photons, and an electron transfer chain that converts photonic excitation into a charge separation. The D1/D2 (PsbA/PsbD) reaction center heterodimer binds P680, the primary electron donor of PSII as well as several subsequent electron acceptors. The sequence is that of Photosystem II protein D1 1 from Synechococcus sp. (strain CC9902).